Here is a 397-residue protein sequence, read N- to C-terminus: Acetate kinase 2 (397 aa).

Residue N10 coordinates Mg(2+). Residue K17 coordinates ATP. Residue R90 coordinates substrate. The active-site Proton donor/acceptor is D147. Residues 207 to 211 (HLGNG), 281 to 283 (DAR), and 329 to 333 (GIGEN) each bind ATP. Mg(2+) is bound at residue E385.

It belongs to the acetokinase family. As to quaternary structure, homodimer. Mg(2+) is required as a cofactor. Requires Mn(2+) as cofactor.

The protein localises to the cytoplasm. The catalysed reaction is acetate + ATP = acetyl phosphate + ADP. It participates in metabolic intermediate biosynthesis; acetyl-CoA biosynthesis; acetyl-CoA from acetate: step 1/2. Catalyzes the formation of acetyl phosphate from acetate and ATP. Can also catalyze the reverse reaction. This Vibrio vulnificus (strain CMCP6) protein is Acetate kinase 2.